Reading from the N-terminus, the 356-residue chain is Glycerol-1-phosphate dehydrogenase [NAD(P)+] (356 aa).

NAD(+) is bound by residues G103 to D107 and T125 to S128. D130 contributes to the substrate binding site. Residue S134 participates in NAD(+) binding. Substrate is bound at residue D177. Positions 177 and 257 each coordinate Zn(2+). Residue H261 coordinates substrate. Residue H273 participates in Zn(2+) binding.

The protein belongs to the glycerol-1-phosphate dehydrogenase family. The cofactor is Zn(2+).

The protein resides in the cytoplasm. It catalyses the reaction sn-glycerol 1-phosphate + NAD(+) = dihydroxyacetone phosphate + NADH + H(+). It carries out the reaction sn-glycerol 1-phosphate + NADP(+) = dihydroxyacetone phosphate + NADPH + H(+). The protein operates within membrane lipid metabolism; glycerophospholipid metabolism. Functionally, catalyzes the NAD(P)H-dependent reduction of dihydroxyacetonephosphate (DHAP or glycerone phosphate) to glycerol 1-phosphate (G1P). The G1P thus generated is used as the glycerophosphate backbone of phospholipids in the cellular membranes of Archaea. The polypeptide is Glycerol-1-phosphate dehydrogenase [NAD(P)+] (Methanosarcina barkeri (strain Fusaro / DSM 804)).